Reading from the N-terminus, the 348-residue chain is Cyclin-dependent kinase inhibitor 1C (348 aa).

Arginine 109 is subject to Omega-N-methylarginine. Residues 115-348 are disordered; the sequence is VAVIPRSGPP…VEQTPRKRLR (234 aa). Composition is skewed to acidic residues over residues 207–220 and 227–274; these read QGEE…DELG and QGEE…QDEN. Residues 275–284 show a composition bias toward basic and acidic residues; that stretch reads QEQRGQELKD. The short motif at 309 to 312 is the Nuclear localization signal element; it reads KRKR.

Belongs to the CDI family. As to quaternary structure, interacts with PCNA. Expressed in the heart, brain, lung, skeletal muscle, kidney, pancreas and testis. High levels are seen in the placenta while low levels are seen in the liver.

Its subcellular location is the nucleus. In terms of biological role, potent tight-binding inhibitor of several G1 cyclin/CDK complexes (cyclin E-CDK2, cyclin D2-CDK4, and cyclin A-CDK2) and, to lesser extent, of the mitotic cyclin B-CDC2. Negative regulator of cell proliferation. May play a role in maintenance of the non-proliferative state throughout life. The chain is Cyclin-dependent kinase inhibitor 1C (Cdkn1c) from Mus musculus (Mouse).